Consider the following 175-residue polypeptide: Alpha-crystallin B chain (175 aa).

Position 1 is an N-acetylmethionine (methionine 1). Phosphoserine occurs at positions 19, 45, and 59. In terms of domain architecture, sHSP spans 56 to 164; sequence RAPSWIDTGL…PERTIPITRE (109 aa). Histidine 83 serves as a coordination point for Zn(2+). An N6-acetyllysine modification is found at lysine 92. Zn(2+)-binding residues include histidine 104, glutamate 106, histidine 111, and histidine 119. The interval 145–175 is disordered; that stretch reads VNGPRKQVSGPERTIPITREEKPAVAAAPKK. An N6-acetyllysine modification is found at lysine 166.

This sequence belongs to the small heat shock protein (HSP20) family. As to quaternary structure, heteromer composed of three CRYAA and one CRYAB subunits. Aggregates with homologous proteins, including the small heat shock protein HSPB1, to form large heteromeric complexes. Inter-subunit bridging via zinc ions enhances stability, which is crucial as there is no protein turn over in the lens. Interacts with HSPBAP1. Interacts with TTN/titin. Interacts with TMEM109; in the cellular response to DNA damage. Interacts with DES; binds rapidly during early stages of DES filament assembly and a reduced binding seen in the later stages. Interacts with TMED10; the interaction mediates the translocation from the cytoplasm into the ERGIC (endoplasmic reticulum-Golgi intermediate compartment) and thereby secretion. Interacts with ATP6V1A and with MTOR, forming a ternary complex. Abundantly expressed in the lens of the eye. Expressed in ventricular cardiomyocytes of the heart. Also expressed in skeletal muscle and the kidney.

The protein localises to the cytoplasm. The protein resides in the cytosol. It is found in the nucleus. It localises to the secreted. Its subcellular location is the lysosome. Its function is as follows. May contribute to the transparency and refractive index of the lens. Has chaperone-like activity, preventing aggregation of various proteins under a wide range of stress conditions. In lens epithelial cells, stabilizes the ATP6V1A protein, preventing its degradation by the proteasome. In Mus musculus (Mouse), this protein is Alpha-crystallin B chain.